The chain runs to 350 residues: GTPase Obg (350 aa).

The 159-residue stretch at 1 to 159 (MKLVDEAEIL…RLLKLELRLL (159 aa)) folds into the Obg domain. Residues 127–146 (NMHFKSSVNRAPRQSTTGEE) are disordered. Residues 130–143 (FKSSVNRAPRQSTT) are compositionally biased toward polar residues. An OBG-type G domain is found at 160–337 (ADVGLLGFPN…IMKDVMAFFD (178 aa)). GTP is bound by residues 166–173 (GFPNAGKS), 191–195 (FTTLY), 213–216 (DVPG), 287–290 (NKAD), and 318–320 (SAL). Mg(2+) is bound by residues Ser173 and Thr193.

This sequence belongs to the TRAFAC class OBG-HflX-like GTPase superfamily. OBG GTPase family. Monomer. It depends on Mg(2+) as a cofactor.

The protein localises to the cytoplasm. In terms of biological role, an essential GTPase which binds GTP, GDP and possibly (p)ppGpp with moderate affinity, with high nucleotide exchange rates and a fairly low GTP hydrolysis rate. Plays a role in control of the cell cycle, stress response, ribosome biogenesis and in those bacteria that undergo differentiation, in morphogenesis control. The chain is GTPase Obg from Xanthomonas oryzae pv. oryzae (strain MAFF 311018).